Reading from the N-terminus, the 1318-residue chain is Meiotically up-regulated gene 79 protein (1318 aa).

3 disordered regions span residues 177 to 198 (PVNS…SGSY), 208 to 227 (EEEL…IVVT), and 360 to 387 (PQAL…PPKG). The segment covering 364–384 (AAAESPTTKAPTTKAPTSEAP) has biased composition (low complexity). The PH domain maps to 1049–1158 (MISYKKMVLS…WIHSLNFNAA (110 aa)).

The protein localises to the nucleus. Appears to have a role in sporulation. The polypeptide is Meiotically up-regulated gene 79 protein (mug79) (Schizosaccharomyces pombe (strain 972 / ATCC 24843) (Fission yeast)).